Reading from the N-terminus, the 521-residue chain is Protein DETOXIFICATION 44, chloroplastic (521 aa).

A chloroplast-targeting transit peptide spans 1 to 31 (MAAVATSFCFSPHRSPSRFGNPNSSIRRTIV). Residues 12–73 (PHRSPSRFGN…DHDHKPDPGI (62 aa)) are disordered. Composition is skewed to polar residues over residues 18–27 (RFGNPNSSIR) and 42–61 (AVSTSSQRPEKQQNPLTSQN). Helical transmembrane passes span 80–100 (IMSIALPAALALAADPITSLV), 103–123 (AFVGHIGSAELAAVGVSVSVF), 167–187 (VSTSLVLAAGVGIAEAIALSL), 213–235 (RLRAYGAPPIVVALAAQGAFRGF), 242–262 (LYAVVAGNVLNAVLDPILIFV), 268–288 (SGAAAATVISEYLIAFILLWK), 314–334 (LLIGRTVALLVPFTLATSLAA), 345–365 (QIVLEIWLAVSLLTDALAIAA), 385–405 (LFGVLQVGLATGTGLAAVLFI), 423–443 (IALSGTLFVAGSQPVNALAFV), 454–474 (FGFAAYSMVIVGFISSLFMLV), and 481–503 (LAGIWTGLFLFMALRLVAGAWRL).

Belongs to the multi antimicrobial extrusion (MATE) (TC 2.A.66.1) family. Expressed in shoots.

It localises to the plastid. It is found in the chloroplast membrane. The chain is Protein DETOXIFICATION 44, chloroplastic from Arabidopsis thaliana (Mouse-ear cress).